The primary structure comprises 397 residues: Lysophospholipid transporter LplT (397 aa).

At 1–17 (MSESVHTNTSLWSKGMK) the chain is on the periplasmic side. A helical transmembrane segment spans residues 18–38 (AVIVAQFLSAFGDNALLFATL). The Cytoplasmic segment spans residues 39 to 52 (ALLNAQFYPEWSQP). Residues 53–73 (ILQMVFVGAYILFAPFVGQVA) form a helical membrane-spanning segment. The Periplasmic segment spans residues 74–90 (DSFAKGRVMMFANGLKL). Residues 91-111 (LGAASICFGINPFLGYTLVGV) traverse the membrane as a helical segment. Over 112–144 (GAAAYSPAKYGILGELTTGSKLVKANGLMEAST) the chain is Cytoplasmic. Residues 145–165 (IAAILLGSVAGGVLADWHVLV) form a helical membrane-spanning segment. A topological domain (periplasmic) is located at residue Ala166. The helical transmembrane segment at 167 to 187 (LAACALAYGGAVVANIYIPKL) threads the bilayer. Over 188–226 (AAARPGQSWNLINMTRSFLNACTSLWRNGETRFSLVGTS) the chain is Cytoplasmic. Residues 227–247 (LFWGAGVTLRFLLVLWVPVAL) traverse the membrane as a helical segment. At 248–256 (GITDNATPT) the chain is on the periplasmic side. The helical transmembrane segment at 257 to 277 (YLNAMVAIGIVVGAGAAAKLV) threads the bilayer. Over 278–280 (TLE) the chain is Cytoplasmic. Residues 281-301 (TVSRCMPAGILIGVVVLIFSL) form a helical membrane-spanning segment. At 302-304 (QHE) the chain is on the periplasmic side. The helical transmembrane segment at 305-325 (LLPAYALLMLIGVMGGFFVVP) threads the bilayer. Residues 326-343 (LNALLQERGKKSVGAGNA) lie on the Cytoplasmic side of the membrane. Residues 344–364 (IAVQNLGENSAMLLMLGIYSL) form a helical membrane-spanning segment. At 365-366 (AV) the chain is on the periplasmic side. The helical transmembrane segment at 367–387 (MIGIPVVPIGIGFGALFALAI) threads the bilayer. The Cytoplasmic portion of the chain corresponds to 388–397 (TALWIWQRRH).

The protein belongs to the major facilitator superfamily. LplT (TC 2.A.1.42) family.

It localises to the cell inner membrane. In terms of biological role, catalyzes the facilitated diffusion of 2-acyl-glycero-3-phosphoethanolamine (2-acyl-GPE) into the cell. The polypeptide is Lysophospholipid transporter LplT (Escherichia coli (strain SE11)).